A 120-amino-acid polypeptide reads, in one-letter code: NAD(P)H-quinone oxidoreductase subunit 3, chloroplastic (120 aa).

The next 3 membrane-spanning stretches (helical) occupy residues 9-29 (FFWA…LISG), 64-84 (MFAL…PWAM), and 88-108 (VLGV…IIGL).

It belongs to the complex I subunit 3 family. NDH is composed of at least 16 different subunits, 5 of which are encoded in the nucleus.

Its subcellular location is the plastid. It localises to the chloroplast thylakoid membrane. The enzyme catalyses a plastoquinone + NADH + (n+1) H(+)(in) = a plastoquinol + NAD(+) + n H(+)(out). The catalysed reaction is a plastoquinone + NADPH + (n+1) H(+)(in) = a plastoquinol + NADP(+) + n H(+)(out). Functionally, NDH shuttles electrons from NAD(P)H:plastoquinone, via FMN and iron-sulfur (Fe-S) centers, to quinones in the photosynthetic chain and possibly in a chloroplast respiratory chain. The immediate electron acceptor for the enzyme in this species is believed to be plastoquinone. Couples the redox reaction to proton translocation, and thus conserves the redox energy in a proton gradient. In Nicotiana tabacum (Common tobacco), this protein is NAD(P)H-quinone oxidoreductase subunit 3, chloroplastic.